The chain runs to 138 residues: ATP synthase epsilon chain (138 aa).

The protein belongs to the ATPase epsilon chain family. F-type ATPases have 2 components, CF(1) - the catalytic core - and CF(0) - the membrane proton channel. CF(1) has five subunits: alpha(3), beta(3), gamma(1), delta(1), epsilon(1). CF(0) has three main subunits: a, b and c.

It localises to the cell inner membrane. Its function is as follows. Produces ATP from ADP in the presence of a proton gradient across the membrane. The polypeptide is ATP synthase epsilon chain (Polaromonas sp. (strain JS666 / ATCC BAA-500)).